The following is a 195-amino-acid chain: Imidazoleglycerol-phosphate dehydratase (195 aa).

It belongs to the imidazoleglycerol-phosphate dehydratase family.

It localises to the cytoplasm. The enzyme catalyses D-erythro-1-(imidazol-4-yl)glycerol 3-phosphate = 3-(imidazol-4-yl)-2-oxopropyl phosphate + H2O. It participates in amino-acid biosynthesis; L-histidine biosynthesis; L-histidine from 5-phospho-alpha-D-ribose 1-diphosphate: step 6/9. The polypeptide is Imidazoleglycerol-phosphate dehydratase (Burkholderia cenocepacia (strain ATCC BAA-245 / DSM 16553 / LMG 16656 / NCTC 13227 / J2315 / CF5610) (Burkholderia cepacia (strain J2315))).